Consider the following 105-residue polypeptide: Diuretic hormone class 2 (105 aa).

The N-terminal stretch at 1–23 is a signal peptide; the sequence is MTVLCTLMAFVMVVAISSLTVDA. Positions 24 to 63 are excised as a propeptide; it reads IPHSHESYWDQQDDIDRDEFLELLSRLSRTVMNRPEMENS. Position 96 is a proline amide (Pro96). The propeptide occupies 101–105; the sequence is RSEQA.

In terms of tissue distribution, expressed in central brain, antennal lobes, retrocerebral complex and gnathal, thoracic and abdominal ganglia but not in optical lobes (at protein level).

Its subcellular location is the secreted. Functionally, regulation of fluid secretion. Stimulates Malpighian tubules fluid secretion. This is Diuretic hormone class 2 from Camponotus floridanus (Florida carpenter ant).